The chain runs to 425 residues: Riboflavin biosynthesis protein RibBA (425 aa).

The segment at 1-204 (MTRLDSVERA…IADLIEWRRK (204 aa)) is DHBP synthase. Residues 28-29 (RE), D33, 141-145 (RPGHT), and E165 each bind D-ribulose 5-phosphate. E29 is a Mg(2+) binding site. Residue H144 coordinates Mg(2+). The GTP cyclohydrolase II stretch occupies residues 205–425 (HEKHIERVAE…HLPGEFGGAL (221 aa)). A GTP-binding site is contributed by 259 to 263 (RVHSE). 3 residues coordinate Zn(2+): C264, C275, and C277. Residues Q280, 303 to 305 (EGR), and T325 each bind GTP. The active-site Proton acceptor; for GTP cyclohydrolase activity is D337. R339 acts as the Nucleophile; for GTP cyclohydrolase activity in catalysis. GTP contacts are provided by T360 and K365.

The protein in the N-terminal section; belongs to the DHBP synthase family. It in the C-terminal section; belongs to the GTP cyclohydrolase II family. The cofactor is Mg(2+). Requires Mn(2+) as cofactor. Zn(2+) is required as a cofactor.

It catalyses the reaction D-ribulose 5-phosphate = (2S)-2-hydroxy-3-oxobutyl phosphate + formate + H(+). It carries out the reaction GTP + 4 H2O = 2,5-diamino-6-hydroxy-4-(5-phosphoribosylamino)-pyrimidine + formate + 2 phosphate + 3 H(+). Its pathway is cofactor biosynthesis; riboflavin biosynthesis; 2-hydroxy-3-oxobutyl phosphate from D-ribulose 5-phosphate: step 1/1. It functions in the pathway cofactor biosynthesis; riboflavin biosynthesis; 5-amino-6-(D-ribitylamino)uracil from GTP: step 1/4. In terms of biological role, catalyzes the conversion of D-ribulose 5-phosphate to formate and 3,4-dihydroxy-2-butanone 4-phosphate. Its function is as follows. Catalyzes the conversion of GTP to 2,5-diamino-6-ribosylamino-4(3H)-pyrimidinone 5'-phosphate (DARP), formate and pyrophosphate. The polypeptide is Riboflavin biosynthesis protein RibBA (Mycobacterium bovis (strain ATCC BAA-935 / AF2122/97)).